The primary structure comprises 109 residues: Aquaporin-2 (109 aa).

At 1–6 (SIAFSR) the chain is on the cytoplasmic side. A helical membrane pass occupies residues 7–27 (AVLAEFLATLLFVFFGLGSAL). Over 28–35 (NWPQAMPS) the chain is Extracellular. A helical transmembrane segment spans residues 36–54 (VLQIAMAFGLAIGTLVQAL). Residues 55–59 (GHVSG) lie on the Cytoplasmic side of the membrane. Positions 60–69 (AHINPAVTVA) form an intramembrane region, discontinuously helical. The NPA 1 motif lies at 63 to 65 (NPA). Over 70–80 (CLVGCHVSFLR) the chain is Cytoplasmic. The helical transmembrane segment at 81 to 102 (AAFYVAAQLLGAVAGAALLHEI) threads the bilayer. The Extracellular segment spans residues 103-109 (TPPDIRR).

This sequence belongs to the MIP/aquaporin (TC 1.A.8) family. Homotetramer. Post-translationally, serine phosphorylation is necessary and sufficient for expression at the apical membrane. Endocytosis is not phosphorylation-dependent. In terms of processing, N-glycosylated.

The protein localises to the apical cell membrane. The protein resides in the basolateral cell membrane. Its subcellular location is the cell membrane. It localises to the cytoplasmic vesicle membrane. It is found in the golgi apparatus. The protein localises to the trans-Golgi network membrane. It catalyses the reaction H2O(in) = H2O(out). The enzyme catalyses glycerol(in) = glycerol(out). Functionally, forms a water-specific channel that provides the plasma membranes of renal collecting duct with high permeability to water, thereby permitting water to move in the direction of an osmotic gradient. Plays an essential role in renal water homeostasis. Could also be permeable to glycerol. In Equus caballus (Horse), this protein is Aquaporin-2.